A 943-amino-acid polypeptide reads, in one-letter code: Isoleucine--tRNA ligase (943 aa).

The short motif at 58–68 (PYANGKIHIGH) is the 'HIGH' region element. E567 is an L-isoleucyl-5'-AMP binding site. The 'KMSKS' region motif lies at 608 to 612 (KMSKS). K611 contributes to the ATP binding site. Zn(2+)-binding residues include C906, C909, C926, and C929.

The protein belongs to the class-I aminoacyl-tRNA synthetase family. IleS type 1 subfamily. In terms of assembly, monomer. Requires Zn(2+) as cofactor.

It is found in the cytoplasm. It carries out the reaction tRNA(Ile) + L-isoleucine + ATP = L-isoleucyl-tRNA(Ile) + AMP + diphosphate. Its function is as follows. Catalyzes the attachment of isoleucine to tRNA(Ile). As IleRS can inadvertently accommodate and process structurally similar amino acids such as valine, to avoid such errors it has two additional distinct tRNA(Ile)-dependent editing activities. One activity is designated as 'pretransfer' editing and involves the hydrolysis of activated Val-AMP. The other activity is designated 'posttransfer' editing and involves deacylation of mischarged Val-tRNA(Ile). This chain is Isoleucine--tRNA ligase, found in Pseudomonas putida (strain ATCC 47054 / DSM 6125 / CFBP 8728 / NCIMB 11950 / KT2440).